We begin with the raw amino-acid sequence, 211 residues long: Thiamine-phosphate synthase (211 aa).

Residues Gln-37–Lys-41 and Asn-69 each bind 4-amino-2-methyl-5-(diphosphooxymethyl)pyrimidine. The Mg(2+) site is built by Asp-70 and Asp-89. A 4-amino-2-methyl-5-(diphosphooxymethyl)pyrimidine-binding site is contributed by Ser-108. Ser-135–Thr-137 contacts 2-[(2R,5Z)-2-carboxy-4-methylthiazol-5(2H)-ylidene]ethyl phosphate. Lys-138 is a 4-amino-2-methyl-5-(diphosphooxymethyl)pyrimidine binding site. Residues Gly-165 and Leu-185–Ser-186 each bind 2-[(2R,5Z)-2-carboxy-4-methylthiazol-5(2H)-ylidene]ethyl phosphate.

This sequence belongs to the thiamine-phosphate synthase family. Mg(2+) is required as a cofactor.

It carries out the reaction 2-[(2R,5Z)-2-carboxy-4-methylthiazol-5(2H)-ylidene]ethyl phosphate + 4-amino-2-methyl-5-(diphosphooxymethyl)pyrimidine + 2 H(+) = thiamine phosphate + CO2 + diphosphate. The catalysed reaction is 2-(2-carboxy-4-methylthiazol-5-yl)ethyl phosphate + 4-amino-2-methyl-5-(diphosphooxymethyl)pyrimidine + 2 H(+) = thiamine phosphate + CO2 + diphosphate. It catalyses the reaction 4-methyl-5-(2-phosphooxyethyl)-thiazole + 4-amino-2-methyl-5-(diphosphooxymethyl)pyrimidine + H(+) = thiamine phosphate + diphosphate. Its pathway is cofactor biosynthesis; thiamine diphosphate biosynthesis; thiamine phosphate from 4-amino-2-methyl-5-diphosphomethylpyrimidine and 4-methyl-5-(2-phosphoethyl)-thiazole: step 1/1. Condenses 4-methyl-5-(beta-hydroxyethyl)thiazole monophosphate (THZ-P) and 2-methyl-4-amino-5-hydroxymethyl pyrimidine pyrophosphate (HMP-PP) to form thiamine monophosphate (TMP). This is Thiamine-phosphate synthase from Thiobacillus denitrificans (strain ATCC 25259 / T1).